The chain runs to 100 residues: Urease subunit gamma (100 aa).

This sequence belongs to the urease gamma subunit family. In terms of assembly, heterotrimer of UreA (gamma), UreB (beta) and UreC (alpha) subunits. Three heterotrimers associate to form the active enzyme.

It is found in the cytoplasm. It carries out the reaction urea + 2 H2O + H(+) = hydrogencarbonate + 2 NH4(+). It functions in the pathway nitrogen metabolism; urea degradation; CO(2) and NH(3) from urea (urease route): step 1/1. This Streptomyces coelicolor (strain ATCC BAA-471 / A3(2) / M145) protein is Urease subunit gamma.